The primary structure comprises 157 residues: MYCPFCNAEDTKVIDSRLVEEGTQVRRRRECLKCQERFTTFETAELNLPRIIKRDGRRSAFDEEKLRAGLLKALEKRPISTEQIETAVQRIIHKLRARGECEVSSQWLGELVMDELRALDEVAYVRFASVYRSFQDINAFRDEIRRLQKQQKKSHDK.

A zinc finger spans residues 3–34 (CPFCNAEDTKVIDSRLVEEGTQVRRRRECLKC). The region spanning 49–139 (PRIIKRDGRR…VYRSFQDINA (91 aa)) is the ATP-cone domain.

The protein belongs to the NrdR family. Zn(2+) is required as a cofactor.

In terms of biological role, negatively regulates transcription of bacterial ribonucleotide reductase nrd genes and operons by binding to NrdR-boxes. The protein is Transcriptional repressor NrdR of Coxiella burnetii (strain CbuK_Q154) (Coxiella burnetii (strain Q154)).